Here is a 912-residue protein sequence, read N- to C-terminus: Type II beta methyltransferase M.BslI (912 aa).

The protein belongs to the N(4)/N(6)-methyltransferase family. N(4) subfamily.

It catalyses the reaction a 2'-deoxycytidine in DNA + S-adenosyl-L-methionine = an N(4)-methyl-2'-deoxycytidine in DNA + S-adenosyl-L-homocysteine + H(+). Functionally, a beta subtype methylase. Recognizes the double-stranded sequence 5'-CCN(7)GG-3', methylates C-2 on both strands, and protects the DNA from cleavage by the BslI endonuclease. In Bacillus sp. (strain NEB-606), this protein is Type II beta methyltransferase M.BslI (bslIM).